A 245-amino-acid chain; its full sequence is Probable histone chaperone asf-1-like protein (245 aa).

Acidic residues predominate over residues 157–166; the sequence is EDPVAEPVDE. The segment at 157–245 is disordered; sequence EDPVAEPVDE…SGDVEMGDKH (89 aa). The segment covering 167–183 has biased composition (basic and acidic residues); that stretch reads EANKVFDEDDLMPLHDD. Over residues 184 to 206 the composition is skewed to acidic residues; it reads GQDDDEEEEDDDETGPNTEEVDL. Residues 215-245 are compositionally biased toward basic and acidic residues; sequence ANAHDGTEQKNGEESMEHDGASGDVEMGDKH.

This sequence belongs to the ASF1 family. Interacts with histone H3 and histone H4.

The protein resides in the nucleus. Histone chaperone that facilitates histone deposition and histone exchange and removal during nucleosome assembly and disassembly. This chain is Probable histone chaperone asf-1-like protein (asfl-1), found in Caenorhabditis elegans.